A 349-amino-acid chain; its full sequence is N-acetyl-gamma-glutamyl-phosphate reductase (349 aa).

C149 is an active-site residue.

It belongs to the NAGSA dehydrogenase family. Type 1 subfamily.

Its subcellular location is the cytoplasm. The catalysed reaction is N-acetyl-L-glutamate 5-semialdehyde + phosphate + NADP(+) = N-acetyl-L-glutamyl 5-phosphate + NADPH + H(+). It participates in amino-acid biosynthesis; L-arginine biosynthesis; N(2)-acetyl-L-ornithine from L-glutamate: step 3/4. Catalyzes the NADPH-dependent reduction of N-acetyl-5-glutamyl phosphate to yield N-acetyl-L-glutamate 5-semialdehyde. The protein is N-acetyl-gamma-glutamyl-phosphate reductase of Acinetobacter baylyi (strain ATCC 33305 / BD413 / ADP1).